We begin with the raw amino-acid sequence, 278 residues long: Poly(3-hydroxyoctanoate) depolymerase (278 aa).

An N-terminal signal peptide occupies residues 1–33; sequence MPLRTLLCGLLLAVCLGQHALAASRCSERPRTL.

It is found in the secreted. The catalysed reaction is Hydrolyzes the polyester poly{oxycarbonyl[(R)-2-pentylethylene]} to oligomers.. In terms of biological role, hydrolysis of poly(3-hydroxyoctanoic acid). This chain is Poly(3-hydroxyoctanoate) depolymerase (phaZ), found in Pseudomonas fluorescens.